A 269-amino-acid chain; its full sequence is Sulfur carrier protein FdhD (269 aa).

Catalysis depends on Cys-111, which acts as the Cysteine persulfide intermediate.

Belongs to the FdhD family.

The protein resides in the cytoplasm. In terms of biological role, required for formate dehydrogenase (FDH) activity. Acts as a sulfur carrier protein that transfers sulfur from IscS to the molybdenum cofactor prior to its insertion into FDH. The sequence is that of Sulfur carrier protein FdhD from Brucella melitensis biotype 1 (strain ATCC 23456 / CCUG 17765 / NCTC 10094 / 16M).